The primary structure comprises 964 residues: A-type ATP synthase subunit A (964 aa).

The 127-residue stretch at 392–518 (FLGYLMANGT…LSYLFAKLGI (127 aa)) folds into the DOD-type homing endonuclease domain.

Belongs to the ATPase alpha/beta chains family. Has multiple subunits with at least A(3), B(3), C, D, E, F, H, I and proteolipid K(x). Post-translationally, this protein undergoes a protein self splicing that involves a post-translational excision of the VDE intervening region (intein) followed by peptide ligation.

It localises to the cell membrane. The catalysed reaction is ATP + H2O + 4 H(+)(in) = ADP + phosphate + 5 H(+)(out). Component of the A-type ATP synthase that produces ATP from ADP in the presence of a proton gradient across the membrane. The A chain is the catalytic subunit. In Pyrococcus horikoshii (strain ATCC 700860 / DSM 12428 / JCM 9974 / NBRC 100139 / OT-3), this protein is A-type ATP synthase subunit A.